A 2153-amino-acid polypeptide reads, in one-letter code: RNA-directed RNA polymerase L (2153 aa).

The Mn(2+) site is built by His-36, Glu-54, Asp-97, Glu-110, and Val-111. Residue Lys-124 is the For endonuclease activity of the active site. Residues 957–1143 (TGKSIKFKRK…AINQEMWKSM (187 aa)) form the RdRp catalytic domain. Asp-1100 provides a ligand contact to Mg(2+).

It belongs to the Bunyavirales RNA polymerase family. As to quaternary structure, interacts with the viral nucleoprotein. Mn(2+) is required as a cofactor. Requires Mg(2+) as cofactor.

Its subcellular location is the host cytoplasm. The protein localises to the host perinuclear region. It carries out the reaction RNA(n) + a ribonucleoside 5'-triphosphate = RNA(n+1) + diphosphate. In terms of biological role, RNA-dependent RNA polymerase, which is responsible for the replication and transcription of the viral RNA genome using antigenomic RNA as an intermediate. During transcription, synthesizes subgenomic RNAs and assures their capping by a cap-snatching mechanism, which involves the endonuclease activity cleaving the host capped pre-mRNAs. These short capped RNAs are then used as primers for viral transcription. Cleaves ssRNA substrates but not DNA. Seems to downregulate the expression of its own and heterologous mRNAs through its endonuclease activity. In Abrothrix longipilis (Long-haired grass mouse), this protein is RNA-directed RNA polymerase L.